We begin with the raw amino-acid sequence, 708 residues long: Elongation factor G 1 (708 aa).

The tr-type G domain maps to 9-295 (AKVRNIGIMA…AVVRYLPTPL (287 aa)). GTP contacts are provided by residues 18–25 (AHIDAGKT), 86–90 (DTPGH), and 140–143 (NKLD).

It belongs to the TRAFAC class translation factor GTPase superfamily. Classic translation factor GTPase family. EF-G/EF-2 subfamily.

The protein resides in the cytoplasm. Catalyzes the GTP-dependent ribosomal translocation step during translation elongation. During this step, the ribosome changes from the pre-translocational (PRE) to the post-translocational (POST) state as the newly formed A-site-bound peptidyl-tRNA and P-site-bound deacylated tRNA move to the P and E sites, respectively. Catalyzes the coordinated movement of the two tRNA molecules, the mRNA and conformational changes in the ribosome. The protein is Elongation factor G 1 (fusA) of Streptomyces coelicolor (strain ATCC BAA-471 / A3(2) / M145).